The sequence spans 409 residues: Argininosuccinate synthase (409 aa).

Residue 10–18 (AYSGGLDTS) coordinates ATP. Tyr87 serves as a coordination point for L-citrulline. Gly117 contacts ATP. Thr119, Asn123, and Asp124 together coordinate L-aspartate. Asn123 serves as a coordination point for L-citrulline. L-citrulline-binding residues include Arg127, Ser175, Ser184, Glu260, and Tyr272.

The protein belongs to the argininosuccinate synthase family. Type 1 subfamily. As to quaternary structure, homotetramer.

It localises to the cytoplasm. It catalyses the reaction L-citrulline + L-aspartate + ATP = 2-(N(omega)-L-arginino)succinate + AMP + diphosphate + H(+). The protein operates within amino-acid biosynthesis; L-arginine biosynthesis; L-arginine from L-ornithine and carbamoyl phosphate: step 2/3. In Rubrobacter xylanophilus (strain DSM 9941 / JCM 11954 / NBRC 16129 / PRD-1), this protein is Argininosuccinate synthase.